We begin with the raw amino-acid sequence, 301 residues long: Phosducin-like protein (301 aa).

Threonine 2 carries the post-translational modification N-acetylthreonine. A disordered region spans residues 18–57 (SSSEDEDSDHEDKDRGRCAPASSSVPAEAELAGEGISVNT). 2 positions are modified to phosphoserine: serine 20 and serine 25. Residues 36-49 (APASSSVPAEAELA) show a composition bias toward low complexity. One can recognise a Phosducin domain in the interval 36-299 (APASSSVPAE…TCHSEDSDLE (264 aa)). Phosphoserine occurs at positions 226, 293, and 296.

Belongs to the phosducin family. In terms of assembly, forms a complex with the beta and gamma subunits of the GTP-binding protein, transducin. Interacts with the CCT chaperonin complex.

Its subcellular location is the cell projection. It localises to the cilium. Functionally, acts as a positive regulator of hedgehog signaling and regulates ciliary function. In terms of biological role, functions as a co-chaperone for CCT in the assembly of heterotrimeric G protein complexes, facilitates the assembly of both Gbeta-Ggamma and RGS-Gbeta5 heterodimers. Acts as a negative regulator of heterotrimeric G proteins assembly by trapping the preloaded G beta subunits inside the CCT chaperonin. The polypeptide is Phosducin-like protein (PDCL) (Homo sapiens (Human)).